The chain runs to 329 residues: Tryptophan--tRNA ligase (329 aa).

Residues 9–11 and 17–18 each bind ATP; these read QPS and GN. A 'HIGH' region motif is present at residues 10-18; it reads PSGIPTIGN. Residue D133 participates in L-tryptophan binding. ATP is bound by residues 145–147, V184, and 193–197; these read GDD and KMSKS. A 'KMSKS' region motif is present at residues 193–197; it reads KMSKS.

This sequence belongs to the class-I aminoacyl-tRNA synthetase family. In terms of assembly, homodimer.

It is found in the cytoplasm. It carries out the reaction tRNA(Trp) + L-tryptophan + ATP = L-tryptophyl-tRNA(Trp) + AMP + diphosphate + H(+). Functionally, catalyzes the attachment of tryptophan to tRNA(Trp). This is Tryptophan--tRNA ligase from Staphylococcus epidermidis (strain ATCC 35984 / DSM 28319 / BCRC 17069 / CCUG 31568 / BM 3577 / RP62A).